A 182-amino-acid polypeptide reads, in one-letter code: dTTP/UTP pyrophosphatase (182 aa).

The Proton acceptor role is filled by Asp64.

The protein belongs to the Maf family. YhdE subfamily. A divalent metal cation is required as a cofactor.

Its subcellular location is the cytoplasm. It carries out the reaction dTTP + H2O = dTMP + diphosphate + H(+). It catalyses the reaction UTP + H2O = UMP + diphosphate + H(+). Functionally, nucleoside triphosphate pyrophosphatase that hydrolyzes dTTP and UTP. May have a dual role in cell division arrest and in preventing the incorporation of modified nucleotides into cellular nucleic acids. The protein is dTTP/UTP pyrophosphatase of Thermosipho melanesiensis (strain DSM 12029 / CIP 104789 / BI429).